The following is a 462-amino-acid chain: Putative amidase AmiB2 (462 aa).

Active-site charge relay system residues include lysine 81 and serine 155. Serine 179 serves as the catalytic Acyl-ester intermediate.

Belongs to the amidase family.

It carries out the reaction a monocarboxylic acid amide + H2O = a monocarboxylate + NH4(+). This is Putative amidase AmiB2 (amiB2) from Mycobacterium bovis (strain ATCC BAA-935 / AF2122/97).